Consider the following 209-residue polypeptide: Uracil phosphoribosyltransferase (209 aa).

5-phospho-alpha-D-ribose 1-diphosphate contacts are provided by residues Arg-79, Arg-104, and 131–139; that span reads DPMLATGGS. Residues Ile-194 and 199-201 contribute to the uracil site; that span reads GDA. Asp-200 contributes to the 5-phospho-alpha-D-ribose 1-diphosphate binding site.

The protein belongs to the UPRTase family. It depends on Mg(2+) as a cofactor.

The enzyme catalyses UMP + diphosphate = 5-phospho-alpha-D-ribose 1-diphosphate + uracil. The protein operates within pyrimidine metabolism; UMP biosynthesis via salvage pathway; UMP from uracil: step 1/1. Allosterically activated by GTP. Its function is as follows. Catalyzes the conversion of uracil and 5-phospho-alpha-D-ribose 1-diphosphate (PRPP) to UMP and diphosphate. The sequence is that of Uracil phosphoribosyltransferase from Streptococcus salivarius.